The sequence spans 245 residues: Dehydrogenase/reductase SDR family member 6 (245 aa).

NAD(+) contacts are provided by residues 16-18 (QGI), aspartate 37, and aspartate 58. Residue arginine 144 coordinates substrate. The active-site Proton acceptor is tyrosine 147. NAD(+) is bound by residues lysine 151 and 180–184 (VDTPS). Arginine 188 and arginine 205 together coordinate substrate.

This sequence belongs to the short-chain dehydrogenases/reductases (SDR) family. In terms of assembly, homotetramer.

The protein resides in the cytoplasm. It carries out the reaction cis-4-hydroxy-L-proline + NAD(+) = 4-oxo-L-proline + NADH + H(+). The catalysed reaction is (R)-3-hydroxybutanoate + NAD(+) = acetoacetate + NADH + H(+). The protein operates within amino-acid metabolism. Its pathway is siderophore biosynthesis. Its function is as follows. NAD(H)-dependent dehydrogenase/reductase with a preference for cyclic substrates. Catalyzes stereoselective conversion of 4-oxo-L-proline to cis-4-hydroxy-L-proline, likely a detoxification mechanism for ketoprolines. Mediates the formation of 2,5-dihydroxybenzoate (2,5-DHBA), a siderophore that chelates free cytoplasmic iron and associates with LCN2, thereby regulating iron transport and homeostasis while protecting cells against free radical-induced oxidative stress. The iron-siderophore complex is imported into mitochondria, providing an iron source for mitochondrial metabolic processes in particular heme synthesis. May act as a 3-hydroxybutyrate dehydrogenase. The sequence is that of Dehydrogenase/reductase SDR family member 6 (BDH2) from Bos taurus (Bovine).